We begin with the raw amino-acid sequence, 298 residues long: Beta-1,3-galactosyltransferase 5 (298 aa).

At Met-1–Arg-7 the chain is on the cytoplasmic side. The helical; Signal-anchor for type II membrane protein transmembrane segment at Leu-8 to Leu-28 threads the bilayer. Residues Asn-29–Ala-298 lie on the Lumenal side of the membrane. N-linked (GlcNAc...) asparagine glycosylation is found at Asn-130, Asn-174, and Asn-231.

It belongs to the glycosyltransferase 31 family.

The protein localises to the golgi apparatus membrane. It carries out the reaction a globoside Gb4Cer (d18:1(4E)) + UDP-alpha-D-galactose = a globoside GalGb4Cer (d18:1(4E)) + UDP + H(+). It participates in protein modification; protein glycosylation. In terms of biological role, catalyzes the transfer of Gal to GlcNAc-based acceptors with a preference for the core3 O-linked glycan GlcNAc(beta1,3)GalNAc structure. Can use glycolipid LC3Cer as an efficient acceptor. This chain is Beta-1,3-galactosyltransferase 5 (B3GALT5), found in Gorilla gorilla gorilla (Western lowland gorilla).